Here is a 340-residue protein sequence, read N- to C-terminus: UDP-3-O-acylglucosamine N-acyltransferase (340 aa).

H238 acts as the Proton acceptor in catalysis.

Belongs to the transferase hexapeptide repeat family. LpxD subfamily. As to quaternary structure, homotrimer.

The catalysed reaction is a UDP-3-O-[(3R)-3-hydroxyacyl]-alpha-D-glucosamine + a (3R)-hydroxyacyl-[ACP] = a UDP-2-N,3-O-bis[(3R)-3-hydroxyacyl]-alpha-D-glucosamine + holo-[ACP] + H(+). Its pathway is bacterial outer membrane biogenesis; LPS lipid A biosynthesis. Catalyzes the N-acylation of UDP-3-O-acylglucosamine using 3-hydroxyacyl-ACP as the acyl donor. Is involved in the biosynthesis of lipid A, a phosphorylated glycolipid that anchors the lipopolysaccharide to the outer membrane of the cell. This Shewanella frigidimarina (strain NCIMB 400) protein is UDP-3-O-acylglucosamine N-acyltransferase.